Consider the following 177-residue polypeptide: Large ribosomal subunit protein uL6 (177 aa).

This sequence belongs to the universal ribosomal protein uL6 family. Part of the 50S ribosomal subunit.

Its function is as follows. This protein binds to the 23S rRNA, and is important in its secondary structure. It is located near the subunit interface in the base of the L7/L12 stalk, and near the tRNA binding site of the peptidyltransferase center. The sequence is that of Large ribosomal subunit protein uL6 from Psychrobacter arcticus (strain DSM 17307 / VKM B-2377 / 273-4).